We begin with the raw amino-acid sequence, 63 residues long: MEVKVFDNDVEKALKILKNKLSKSGLFKELKVRRAYEKPSVKRKRKAIEARRRFAKVQRRRSS.

It belongs to the bacterial ribosomal protein bS21 family.

The polypeptide is Small ribosomal subunit protein bS21 (Syntrophus aciditrophicus (strain SB)).